The primary structure comprises 214 residues: Large ribosomal subunit protein uL16 (214 aa).

Citrulline is present on Arg32. Lys175 is covalently cross-linked (Glycyl lysine isopeptide (Lys-Gly) (interchain with G-Cter in SUMO2)). Residue Lys188 forms a Glycyl lysine isopeptide (Lys-Gly) (interchain with G-Cter in ubiquitin) linkage.

It belongs to the universal ribosomal protein uL16 family. As to quaternary structure, component of the large ribosomal subunit. Mature ribosomes consist of a small (40S) and a large (60S) subunit. The 40S subunit contains about 33 different proteins and 1 molecule of RNA (18S). The 60S subunit contains about 49 different proteins and 3 molecules of RNA (28S, 5.8S and 5S). Post-translationally, citrullinated by PADI4. Ufmylated by UFL1.

Its subcellular location is the cytoplasm. Component of the large ribosomal subunit. Plays a role in the formation of actively translating ribosomes. May play a role in the embryonic brain development. This is Large ribosomal subunit protein uL16 from Bos taurus (Bovine).